A 609-amino-acid chain; its full sequence is RAS guanyl-releasing protein 2 (609 aa).

Ala-2 is lipidated: N-myristoyl glycine. The N-terminal Ras-GEF domain occupies 4 to 126 (TLDLDKGCTV…SLIDIDSVPT (123 aa)). Leu-7 carries S-palmitoyl cysteine lipidation. Residues Ser-116, Ser-117, and Ser-147 each carry the phosphoserine modification. Residues 154–387 (EPMELAEHLT…YQLSLQREPR (234 aa)) enclose the Ras-GEF domain. Residues 382–406 (LQREPRSKSSPTSPTSCTPPPRPPV) form a disordered region. EF-hand domains follow at residues 426–461 (HIEK…FPYL) and 455–490 (RGNF…SSSV). The Ca(2+) site is built by Asp-439, Asp-441, Asp-443, His-445, Glu-450, Asp-468, Asn-470, Asp-472, Cys-474, and Glu-479. Residues 498–548 (VHNFQESNSLRPVACRHCKALILGIYKQGLKCRACGVNCHKQCKDRLSVEC) form a Phorbol-ester/DAG-type zinc finger. Phosphoserine occurs at positions 554 and 576. The disordered stretch occupies residues 557–592 (LEGSAPSPSPMHSHHHRAFSFSLPRPGRRGSRPPEI).

It belongs to the RASGRP family. As to quaternary structure, forms a signaling complex with RAP1 and BRAF. Interacts with RAP1. Interacts with F-actin. Isoform 2 is palmitoylated and myristoylated. As to expression, detected in platelets, neutrophils and T lymphocytes (at protein level). Expressed in brain where it is enriched in the striatum. Also expressed in the hematopoietic system. Detected in heart, brain, lung, placenta, liver, skeletal muscle and kidney.

The protein localises to the cytoplasm. Its subcellular location is the cytosol. It is found in the cell membrane. It localises to the synapse. The protein resides in the synaptosome. The protein localises to the cell projection. Its subcellular location is the ruffle membrane. Its activity is regulated as follows. Isoform 1 and isoform 2 are differently regulated by calcium and DAG. Functions as a calcium- and DAG-regulated nucleotide exchange factor specifically activating Rap through the exchange of bound GDP for GTP. May also activate other GTPases such as RRAS, RRAS2, NRAS, KRAS but not HRAS. Functions in aggregation of platelets and adhesion of T-lymphocytes and neutrophils probably through inside-out integrin activation. May function in the muscarinic acetylcholine receptor M1/CHRM1 signaling pathway. The protein is RAS guanyl-releasing protein 2 (RASGRP2) of Homo sapiens (Human).